The chain runs to 126 residues: MTPEQQDLMDRAEQSLQAARILADEALFDVSVSRSYYAMFYCARASLLALNLSSKSHSGTISLFGQHLAAAGRLPIEIHRQLIDAERLRILGDYGGANSHCSQQDAQVLIAQSARFMQIAMEFLAQ.

This sequence belongs to the UPF0332 family.

The protein is UPF0332 protein glr0978 of Gloeobacter violaceus (strain ATCC 29082 / PCC 7421).